The following is a 651-amino-acid chain: Beta-glucuronidase (651 aa).

The first 22 residues, 1 to 22, serve as a signal peptide directing secretion; it reads MSRGPAGAWVALGPLLWTCGLA. Asn172 and Asn419 each carry an N-linked (GlcNAc...) asparagine glycan. Glu450 acts as the Proton donor in catalysis. A glycan (N-linked (GlcNAc...) asparagine) is linked at Asn630.

The protein belongs to the glycosyl hydrolase 2 family. As to quaternary structure, homotetramer.

The protein resides in the lysosome. The enzyme catalyses a beta-D-glucuronoside + H2O = D-glucuronate + an alcohol. With respect to regulation, inhibited by L-aspartic acid. Plays an important role in the degradation of dermatan and keratan sulfates. The sequence is that of Beta-glucuronidase (GUSB) from Canis lupus familiaris (Dog).